The following is a 163-amino-acid chain: Lipoprotein signal peptidase (163 aa).

Transmembrane regions (helical) follow at residues Y9–S29, V39–A59, W67–S87, and L92–V112. Residues D119 and D137 contribute to the active site. Residues W130 to G150 form a helical membrane-spanning segment.

It belongs to the peptidase A8 family.

Its subcellular location is the cell inner membrane. The enzyme catalyses Release of signal peptides from bacterial membrane prolipoproteins. Hydrolyzes -Xaa-Yaa-Zaa-|-(S,diacylglyceryl)Cys-, in which Xaa is hydrophobic (preferably Leu), and Yaa (Ala or Ser) and Zaa (Gly or Ala) have small, neutral side chains.. Its pathway is protein modification; lipoprotein biosynthesis (signal peptide cleavage). This protein specifically catalyzes the removal of signal peptides from prolipoproteins. This is Lipoprotein signal peptidase from Polynucleobacter necessarius subsp. necessarius (strain STIR1).